We begin with the raw amino-acid sequence, 94 residues long: Aspartyl/glutamyl-tRNA(Asn/Gln) amidotransferase subunit C (94 aa).

It belongs to the GatC family. Heterotrimer of A, B and C subunits.

The catalysed reaction is L-glutamyl-tRNA(Gln) + L-glutamine + ATP + H2O = L-glutaminyl-tRNA(Gln) + L-glutamate + ADP + phosphate + H(+). It carries out the reaction L-aspartyl-tRNA(Asn) + L-glutamine + ATP + H2O = L-asparaginyl-tRNA(Asn) + L-glutamate + ADP + phosphate + 2 H(+). In terms of biological role, allows the formation of correctly charged Asn-tRNA(Asn) or Gln-tRNA(Gln) through the transamidation of misacylated Asp-tRNA(Asn) or Glu-tRNA(Gln) in organisms which lack either or both of asparaginyl-tRNA or glutaminyl-tRNA synthetases. The reaction takes place in the presence of glutamine and ATP through an activated phospho-Asp-tRNA(Asn) or phospho-Glu-tRNA(Gln). The chain is Aspartyl/glutamyl-tRNA(Asn/Gln) amidotransferase subunit C from Desulfatibacillum aliphaticivorans.